The chain runs to 296 residues: Developmental pluripotency-associated protein 4 (296 aa).

Over residues 1 to 13 the composition is skewed to basic and acidic residues; it reads METAGDKKWSAEE. The tract at residues 1 to 73 is disordered; that stretch reads METAGDKKWS…QTRRKVPIPP (73 aa). Positions 23–34 are enriched in low complexity; that stretch reads SSQPSTAPAKAK. Positions 42 to 58 are enriched in basic and acidic residues; that stretch reads KSETDNGCKPKEGKPQD.

In terms of assembly, interacts with DPPA2. Interacts with PCGF1. In terms of tissue distribution, expressed in pluripotent embryonic cells, but not in differentiated somatic tissues.

The protein localises to the nucleus. Its function is as follows. May be involved in the maintenance of active epigenetic status of target genes. May inhibit differentiation of embryonic stem (ES) cells into a primitive ectoderm lineage. The protein is Developmental pluripotency-associated protein 4 (Dppa4) of Mus musculus (Mouse).